Consider the following 320-residue polypeptide: o-succinylbenzoate synthase (320 aa).

Lys-133 acts as the Proton donor in catalysis. Mg(2+) contacts are provided by Asp-161, Glu-190, and Asp-213. Residue Lys-235 is the Proton acceptor of the active site.

It belongs to the mandelate racemase/muconate lactonizing enzyme family. MenC type 1 subfamily. A divalent metal cation is required as a cofactor.

The catalysed reaction is (1R,6R)-6-hydroxy-2-succinyl-cyclohexa-2,4-diene-1-carboxylate = 2-succinylbenzoate + H2O. It functions in the pathway quinol/quinone metabolism; 1,4-dihydroxy-2-naphthoate biosynthesis; 1,4-dihydroxy-2-naphthoate from chorismate: step 4/7. Its pathway is quinol/quinone metabolism; menaquinone biosynthesis. In terms of biological role, converts 2-succinyl-6-hydroxy-2,4-cyclohexadiene-1-carboxylate (SHCHC) to 2-succinylbenzoate (OSB). The protein is o-succinylbenzoate synthase of Escherichia coli O17:K52:H18 (strain UMN026 / ExPEC).